The following is a 74-amino-acid chain: Defensin Lc-def (74 aa).

Residues 1 to 27 (MEKKTVAALSFLFIVLFVAQEIAVTEA) form the signal peptide. 4 disulfide bridges follow: cysteine 30-cysteine 74, cysteine 41-cysteine 62, cysteine 47-cysteine 68, and cysteine 51-cysteine 70.

The protein resides in the secreted. In terms of biological role, has antifungal activity against the phytopathogenic fungus A.niger VKM F-2259, but not against A.alternata VKM F-3047. Does not inhibit trypsin or chymotrypsin. The polypeptide is Defensin Lc-def (Lens culinaris subsp. culinaris (Cultivated lentil)).